The primary structure comprises 406 residues: Mitochondrial ribosome-associated GTPase 2 (406 aa).

The tract at residues 15-406 is localized in the mitochondria; that stretch reads FQGVGHWALS…LGQGRQPLRW (392 aa). Residues 30–406 form a not localized in the mitochondria region; it reads KPSRLLPQRA…LGQGRQPLRW (377 aa). Residues 70 to 224 enclose the Obg domain; sequence RYFVDYRRVL…RVLHLELKTV (155 aa). Positions 225–390 constitute an OBG-type G domain; it reads AHAGMVGFPN…LLLHLKVLYD (166 aa). Residues 231–238, 256–260, 278–281, 345–348, and 371–373 each bind GTP; these read GFPNAGKS, FTTLK, DIPG, NKID, and SAL. Serine 238 and threonine 258 together coordinate Mg(2+).

The protein belongs to the TRAFAC class OBG-HflX-like GTPase superfamily. OBG GTPase family. In terms of assembly, associates with the mitochondrial ribosome large subunit; the association occurs in a GTP-dependent manner. Mg(2+) serves as cofactor.

The protein resides in the mitochondrion. Its subcellular location is the mitochondrion inner membrane. Its function is as follows. Plays a role in the regulation of the mitochondrial ribosome assembly and of translational activity. Displays GTPase activity. Involved in the ribosome maturation process. The protein is Mitochondrial ribosome-associated GTPase 2 (MTG2) of Homo sapiens (Human).